Consider the following 673-residue polypeptide: Outer spore wall assembly protein SHE10 (673 aa).

An N-terminal signal peptide occupies residues 1–24 (MRRVRGVGNLLVTILVVLIGFKQA). Residues 503–568 (ILRSQANIAF…LALEQGQGQE (66 aa)) adopt a coiled-coil conformation. Disordered regions lie at residues 530-551 (LEQERQIQEQKEREQQELAENE) and 587-673 (TPLG…SQAN). 2 stretches are compositionally biased toward acidic residues: residues 593–605 (DNTDYENALDDAD) and 612–629 (GDSEDNFYDSYEGDEEDA). Residues 617–647 (NFYDSYEGDEEDASRELERLERESAERETLD) are a coiled coil. The span at 630-673 (SRELERLERESAERETLDRLELGQRQKLQEEQHRDELHHSSQAN) shows a compositional bias: basic and acidic residues.

The protein belongs to the SHE10 family. In terms of assembly, component of the mitochondria-localized RNase mitochondrial RNA-processing (RNase MRP) composed of one single RNA encoded by the NME1 gene and at least 31 proteins. Absent in the nucleus-localized RNase MRP (NuMRP).

Its subcellular location is the mitochondrion. In terms of biological role, involved in spore wall assembly. May be a component of the mitochondrial RNase MRP (MtMRP), a ribonucleoprotein endoribonuclease involved in the cleaving RNA transcripts to generate primers for DNA replication in mitochondria. The protein is Outer spore wall assembly protein SHE10 of Lachancea thermotolerans (strain ATCC 56472 / CBS 6340 / NRRL Y-8284) (Yeast).